We begin with the raw amino-acid sequence, 264 residues long: Apolipoprotein A-I (264 aa).

The signal sequence occupies residues 1 to 18 (MKAVVLAVALVFLTGSQA). Tandem repeats lie at residues 67–88 (LNLLENWDTLGTTVGQLQERLG) and 89–110 (PLTRDFWDNLEKETDWLRQEMN). The segment at 67–264 (LNLLENWDTL…DKARETLTAQ (198 aa)) is 10 X approximate tandem repeats. At Met-109 the chain carries Methionine sulfoxide. The 3; half-length repeat unit spans residues 111–121 (KDLEEVKQNVQ). 3 repeat units span residues 122–143 (PYLDEFQKKWNEDVELYRQRVA), 144–165 (PLGAELHESARQKLQELQGKLS), and 166–187 (PVAEEFRDRMRTHVDALRTQLA). Residues 188 to 207 (PHSDKLRESLAQRLAELKSN) form a 7; truncated repeat. Copy 8 of the repeat occupies 208–229 (PTLNEYHTRAKTHLNTFGEKAR). A 9; half-length repeat occupies 230–240 (PALEDLRHTLI). Repeat 10 spans residues 241 to 264 (PILDTLKTKVKSVIDKARETLTAQ).

This sequence belongs to the apolipoprotein A1/A4/E family. Homodimer. Interacts with APOA1BP and CLU. Component of a sperm activating protein complex (SPAP), consisting of APOA1, an immunoglobulin heavy chain, an immunoglobulin light chain and albumin. Interacts with NDRG1. Interacts with SCGB3A2. Interacts with NAXE and YJEFN3. Glycosylated. In terms of processing, palmitoylated. Post-translationally, phosphorylation sites are present in the extracellular medium.

It localises to the secreted. Functionally, participates in the reverse transport of cholesterol from tissues to the liver for excretion by promoting cholesterol efflux from tissues and by acting as a cofactor for the lecithin cholesterol acyltransferase (LCAT). As part of the SPAP complex, activates spermatozoa motility. In Mus pahari (Gairdner's shrew-mouse), this protein is Apolipoprotein A-I (Apoa1).